A 223-amino-acid chain; its full sequence is Ribosomal RNA small subunit methyltransferase G (223 aa).

S-adenosyl-L-methionine is bound by residues Gly-82, Leu-87, 133-134 (AE), and Arg-151.

The protein belongs to the methyltransferase superfamily. RNA methyltransferase RsmG family.

It localises to the cytoplasm. In terms of biological role, specifically methylates the N7 position of guanine in position 518 of 16S rRNA. This is Ribosomal RNA small subunit methyltransferase G from Corynebacterium glutamicum (strain R).